Reading from the N-terminus, the 300-residue chain is Ribosomal protein L11 methyltransferase (300 aa).

The S-adenosyl-L-methionine site is built by threonine 152, glycine 173, aspartate 195, and asparagine 234.

This sequence belongs to the methyltransferase superfamily. PrmA family.

Its subcellular location is the cytoplasm. It catalyses the reaction L-lysyl-[protein] + 3 S-adenosyl-L-methionine = N(6),N(6),N(6)-trimethyl-L-lysyl-[protein] + 3 S-adenosyl-L-homocysteine + 3 H(+). In terms of biological role, methylates ribosomal protein L11. The polypeptide is Ribosomal protein L11 methyltransferase (Burkholderia multivorans (strain ATCC 17616 / 249)).